The following is a 251-amino-acid chain: Pyrroloquinoline-quinone synthase (251 aa).

Belongs to the PqqC family.

The catalysed reaction is 6-(2-amino-2-carboxyethyl)-7,8-dioxo-1,2,3,4,7,8-hexahydroquinoline-2,4-dicarboxylate + 3 O2 = pyrroloquinoline quinone + 2 H2O2 + 2 H2O + H(+). The protein operates within cofactor biosynthesis; pyrroloquinoline quinone biosynthesis. Functionally, ring cyclization and eight-electron oxidation of 3a-(2-amino-2-carboxyethyl)-4,5-dioxo-4,5,6,7,8,9-hexahydroquinoline-7,9-dicarboxylic-acid to PQQ. This Pseudomonas savastanoi pv. phaseolicola (strain 1448A / Race 6) (Pseudomonas syringae pv. phaseolicola (strain 1448A / Race 6)) protein is Pyrroloquinoline-quinone synthase.